The following is a 150-amino-acid chain: Large ribosomal subunit protein bL9 (150 aa).

It belongs to the bacterial ribosomal protein bL9 family.

Functionally, binds to the 23S rRNA. The chain is Large ribosomal subunit protein bL9 from Polaromonas naphthalenivorans (strain CJ2).